We begin with the raw amino-acid sequence, 1583 residues long: Pentafunctional AROM polypeptide (1583 aa).

A 3-dehydroquinate synthase region spans residues 1–384 (MSNPTKISIL…YETRASVVAN (384 aa)). NAD(+) is bound by residues 44-46 (DTN), 81-84 (EVSK), 114-116 (GGV), and D119. R130 contributes to the 7-phospho-2-dehydro-3-deoxy-D-arabino-heptonate binding site. 139–140 (TT) lines the NAD(+) pocket. 7-phospho-2-dehydro-3-deoxy-D-arabino-heptonate contacts are provided by D146 and K152. K161 contributes to the NAD(+) binding site. N162 contributes to the 7-phospho-2-dehydro-3-deoxy-D-arabino-heptonate binding site. NAD(+) is bound by residues 179–182 (FLET) and N190. E194 lines the Zn(2+) pocket. Residues 194–197 (EVIK) and K250 contribute to the 7-phospho-2-dehydro-3-deoxy-D-arabino-heptonate site. E260 acts as the Proton acceptor; for 3-dehydroquinate synthase activity in catalysis. 7-phospho-2-dehydro-3-deoxy-D-arabino-heptonate contacts are provided by residues 264-268 (RNLLN) and H271. H271 is a Zn(2+) binding site. H275 (proton acceptor; for 3-dehydroquinate synthase activity) is an active-site residue. Residues H287 and K356 each contribute to the 7-phospho-2-dehydro-3-deoxy-D-arabino-heptonate site. H287 is a Zn(2+) binding site. The interval 397-842 (VHPGVAQSSN…WDTLRQLFKV (446 aa)) is EPSP synthase. C824 (for EPSP synthase activity) is an active-site residue. Residues 863-1055 (NASIYIIGMR…KEKEHSFFAS (193 aa)) form a shikimate kinase region. 870–877 (GMRGAGKS) lines the ATP pocket. The segment at 1056–1276 (LTLPDLREAG…AAPGQLSATE (221 aa)) is 3-dehydroquinase. H1179 acts as the Proton acceptor; for 3-dehydroquinate dehydratase activity in catalysis. Catalysis depends on K1207, which acts as the Schiff-base intermediate with substrate; for 3-dehydroquinate dehydratase activity. The interval 1289 to 1583 (PKKFAIFGSP…SARACSSPLI (295 aa)) is shikimate dehydrogenase.

In the N-terminal section; belongs to the sugar phosphate cyclases superfamily. Dehydroquinate synthase family. The protein in the 2nd section; belongs to the EPSP synthase family. This sequence in the 3rd section; belongs to the shikimate kinase family. It in the 4th section; belongs to the type-I 3-dehydroquinase family. In the C-terminal section; belongs to the shikimate dehydrogenase family. As to quaternary structure, homodimer. Requires Zn(2+) as cofactor.

The protein resides in the cytoplasm. The catalysed reaction is 7-phospho-2-dehydro-3-deoxy-D-arabino-heptonate = 3-dehydroquinate + phosphate. It carries out the reaction 3-dehydroquinate = 3-dehydroshikimate + H2O. The enzyme catalyses shikimate + NADP(+) = 3-dehydroshikimate + NADPH + H(+). It catalyses the reaction shikimate + ATP = 3-phosphoshikimate + ADP + H(+). The catalysed reaction is 3-phosphoshikimate + phosphoenolpyruvate = 5-O-(1-carboxyvinyl)-3-phosphoshikimate + phosphate. It functions in the pathway metabolic intermediate biosynthesis; chorismate biosynthesis; chorismate from D-erythrose 4-phosphate and phosphoenolpyruvate: step 2/7. It participates in metabolic intermediate biosynthesis; chorismate biosynthesis; chorismate from D-erythrose 4-phosphate and phosphoenolpyruvate: step 3/7. The protein operates within metabolic intermediate biosynthesis; chorismate biosynthesis; chorismate from D-erythrose 4-phosphate and phosphoenolpyruvate: step 4/7. Its pathway is metabolic intermediate biosynthesis; chorismate biosynthesis; chorismate from D-erythrose 4-phosphate and phosphoenolpyruvate: step 5/7. It functions in the pathway metabolic intermediate biosynthesis; chorismate biosynthesis; chorismate from D-erythrose 4-phosphate and phosphoenolpyruvate: step 6/7. In terms of biological role, the AROM polypeptide catalyzes 5 consecutive enzymatic reactions in prechorismate polyaromatic amino acid biosynthesis. The sequence is that of Pentafunctional AROM polypeptide (aromA) from Emericella nidulans (strain FGSC A4 / ATCC 38163 / CBS 112.46 / NRRL 194 / M139) (Aspergillus nidulans).